Consider the following 134-residue polypeptide: MAQVENVSLSQIIANPYLPPFSTTLFEIVIFTFIMITLYLIFRGSGLVRRRLVLLLIAIYVIVLQLFFTPYEYTTARLLPNGTVDYVVYTSQANIVMALDVLAGLMLILAVVYIILDYLRGFGKGDEEEGVIDL.

3 helical membrane-spanning segments follow: residues 21-41 (FSTT…LYLI), 52-72 (LVLL…TPYE), and 95-115 (IVMA…VYII).

The protein localises to the host membrane. This is an uncharacterized protein from Acidianus two-tailed virus (ATV).